The chain runs to 117 residues: Putative membrane protein insertion efficiency factor (117 aa).

Belongs to the UPF0161 family.

Its subcellular location is the cell inner membrane. Its function is as follows. Could be involved in insertion of integral membrane proteins into the membrane. The chain is Putative membrane protein insertion efficiency factor from Bartonella quintana (strain Toulouse) (Rochalimaea quintana).